The chain runs to 94 residues: Exodeoxyribonuclease 7 small subunit (94 aa).

The protein belongs to the XseB family. Heterooligomer composed of large and small subunits.

The protein resides in the cytoplasm. It catalyses the reaction Exonucleolytic cleavage in either 5'- to 3'- or 3'- to 5'-direction to yield nucleoside 5'-phosphates.. In terms of biological role, bidirectionally degrades single-stranded DNA into large acid-insoluble oligonucleotides, which are then degraded further into small acid-soluble oligonucleotides. The chain is Exodeoxyribonuclease 7 small subunit from Trichormus variabilis (strain ATCC 29413 / PCC 7937) (Anabaena variabilis).